The following is a 603-amino-acid chain: MVLASLSTGVIARIMHGEVVDAPVLQILAIKKINSAADSERYRILISDGKYFNSYAMLASQLNVMQHNGELEEFTIVQLDKYVTSLVGKDGAGKRVLIISELTVVNPGAEVKSKIGEPVTYENAAKQDLAPKPAVTSNSKPIAKKEPSHNNNNNIVMNSSINSGMTHPISSLSPYQNKWVIKARVTSKSGIRTWSNARGEGKLFSMDLMDESGEIRATAFKEQCDKFYDLIQVDSVYYISKCQLKPANKQYSSLNNAYEMTFSGETVVQLCEDTDDDPIPEIKYNLVPISDVSGMENKAAVDTIGICKEVGELQSFVARTTNKEFKKRDITLVDMSNSAISLTLWGDDAVNFDGHVQPVILVKGTRINEFNGGKSLSLGGGSIMKINPDIPEAHKLRGWFDNGGGDSVANMVSARTGGGSFSTEWMTLKDARARNLGSGDKPDYFQCKAVVHIVKQENAFYRACPQSDCNKKVVDEGNDQFRCEKCNALFPNFKYRLLINMSIGDWTSNRWVSSFNEVGEQLLGHTSQEVGEALENDPAKAEQIFSALNFTSHIFKLRCKNEVYGDMTRNKLTVQSVAPINHKEYNKHLLKELQELTGIGSSN.

The interval 131-152 (PKPAVTSNSKPIAKKEPSHNNN) is disordered. S160 is modified (phosphoserine). Residues 179–252 (WVIKARVTSK…QLKPANKQYS (74 aa)) constitute a DNA-binding region (OB). Position 420 is a phosphoserine (S420). The segment at 464–486 (CPQSDCNKKVVDEGNDQFRCEKC) adopts a C4-type zinc-finger fold.

This sequence belongs to the replication factor A protein 1 family. As to quaternary structure, component of the heterotrimeric canonical replication protein A complex (RPA).

It is found in the nucleus. In terms of biological role, as part of the heterotrimeric replication protein A complex (RPA/RP-A), binds and stabilizes single-stranded DNA intermediates, that form during DNA replication or upon DNA stress. It prevents their reannealing and in parallel, recruits and activates different proteins and complexes involved in DNA metabolism. Thereby, it plays an essential role both in DNA replication and the cellular response to DNA damage. This chain is Replication protein A 70 kDa DNA-binding subunit, found in Drosophila melanogaster (Fruit fly).